The sequence spans 540 residues: MEEYKGVWLKAGIIYALNLASNGFKPVEVGLGERDFYVDVESDTTLTLDEAKKFATYNQYSYQLKDGYIEFNGNKIKVLGEPSSLEPKYFEILNISVHHPSPNVQYVRIRGVGFEKKEELDQYLKWLEEVSEYDHRIIGERLDLFSFPDETAPGLALFHYKGQIIRKELMKFMEEINESMGYQEVFTAEIYRSILWKTSGHYDYYKDKMVLFKMEDEELGLKPMNCPAHILIYKSKTRSYKDLPIRFSEFGLVFRWEKRGELYGLLRVRGFVQDDGHIFLTEDQIKDEVKMLVKKTIDVLSIFGFKGDDVRINLSTRPDESIGSDELWEKATNALVSALNELGIKYIVKEKEGAFYGPKIDFDIRDSLGRWWQLSTIQVDFNLPERFKLEYIDKDGSRKRPVMIHRAIYGSIERFMAILLEHFRGKLPTWLSPVQVRILPISKDVEDYALNLLSKLKENKIRVELDMSDETLSKRIKKAYDEGVPYMIIVGKKEREEGKVTVRGRNNVEIRGVKFDDFLKALLEEIRNRDLNQSAINKLK.

A catalytic region spans residues 134–428 (DHRIIGERLD…LLEHFRGKLP (295 aa)). Residues Cys-226, His-277, and His-405 each contribute to the Zn(2+) site.

Belongs to the class-II aminoacyl-tRNA synthetase family. Homodimer. Probably interacts with its editing subunit. The cofactor is Zn(2+).

It is found in the cytoplasm. It carries out the reaction tRNA(Thr) + L-threonine + ATP = L-threonyl-tRNA(Thr) + AMP + diphosphate + H(+). Functionally, catalyzes the attachment of threonine to tRNA(Thr) in a two-step reaction: L-threonine is first activated by ATP to form Thr-AMP and then transferred to the acceptor end of tRNA(Thr). Also activates L-serine and transfers it to tRNA(Thr) but cannot deacylate incorrectly charged amino acid; unlike most archaea the editing function is found in a freestanding protein. The chain is Threonine--tRNA ligase catalytic subunit from Sulfurisphaera tokodaii (strain DSM 16993 / JCM 10545 / NBRC 100140 / 7) (Sulfolobus tokodaii).